We begin with the raw amino-acid sequence, 368 residues long: Phosphoserine aminotransferase (368 aa).

Position 44 (Arg-44) interacts with L-glutamate. Residues 78–79, Trp-104, Thr-157, Asp-179, and Gln-202 contribute to the pyridoxal 5'-phosphate site; that span reads AT. Lys-203 carries the N6-(pyridoxal phosphate)lysine modification. 244–245 is a pyridoxal 5'-phosphate binding site; that stretch reads NT.

It belongs to the class-V pyridoxal-phosphate-dependent aminotransferase family. SerC subfamily. In terms of assembly, homodimer. Pyridoxal 5'-phosphate serves as cofactor.

Its subcellular location is the cytoplasm. The enzyme catalyses O-phospho-L-serine + 2-oxoglutarate = 3-phosphooxypyruvate + L-glutamate. It carries out the reaction 4-(phosphooxy)-L-threonine + 2-oxoglutarate = (R)-3-hydroxy-2-oxo-4-phosphooxybutanoate + L-glutamate. The protein operates within amino-acid biosynthesis; L-serine biosynthesis; L-serine from 3-phospho-D-glycerate: step 2/3. Its pathway is cofactor biosynthesis; pyridoxine 5'-phosphate biosynthesis; pyridoxine 5'-phosphate from D-erythrose 4-phosphate: step 3/5. Catalyzes the reversible conversion of 3-phosphohydroxypyruvate to phosphoserine and of 3-hydroxy-2-oxo-4-phosphonooxybutanoate to phosphohydroxythreonine. In Neisseria meningitidis serogroup A / serotype 4A (strain DSM 15465 / Z2491), this protein is Phosphoserine aminotransferase.